Here is a 100-residue protein sequence, read N- to C-terminus: Small ribosomal subunit protein bS21 (100 aa).

Over residues 37–52 (EKPSEKKAREKAEAVR) the composition is skewed to basic and acidic residues. Positions 37-100 (EKPSEKKARE…GAGAGPRGPR (64 aa)) are disordered. Basic residues predominate over residues 53–62 (RARKLARKKL). The span at 84–100 (GAAGAGAGAGAGPRGPR) shows a compositional bias: gly residues.

It belongs to the bacterial ribosomal protein bS21 family.

This is Small ribosomal subunit protein bS21 from Rhodopseudomonas palustris (strain BisB5).